We begin with the raw amino-acid sequence, 159 residues long: uncharacterized protein (159 aa).

The protein belongs to the IIV-6 136R family.

This is an uncharacterized protein from Invertebrate iridescent virus 3 (IIV-3).